Consider the following 142-residue polypeptide: Gonadotropin subunit beta-2 (142 aa).

An N-terminal signal peptide occupies residues 1-23 (MLGLHVGTLISLFLCILLEPIEG). Intrachain disulfides connect Cys-29–Cys-77, Cys-43–Cys-92, Cys-46–Cys-130, Cys-54–Cys-108, Cys-58–Cys-110, and Cys-113–Cys-120. Asn-33 carries N-linked (GlcNAc...) asparagine glycosylation.

The protein belongs to the glycoprotein hormones subunit beta family. In terms of assembly, heterodimer of an alpha and a beta chain.

It is found in the secreted. Its function is as follows. Involved in gametogenesis and steroidogenesis. This is Gonadotropin subunit beta-2 (cgbb) from Oncorhynchus tshawytscha (Chinook salmon).